Reading from the N-terminus, the 271-residue chain is MRASSEASLKAAADRWEPVLAEAGESARDLAESIFAVVDALDSSASLRRALTDPARPADAKASLTQGLLGAKAPDAVVDLVAGMSRSRWSADDDLASALEEIGTTSLLAAAESRGELERVEDELFRLGRSLIGARELRIALSNRELPVENRVALVDALLEGKVAPETELLVRRAATSMRERSVPNAIAHVGELAAARRRRLVAAVTAAVPLTQGQLTRLGEILERAYGRSVQINVGIDPEVVGGLRVQVGAEVVDATVLTKLEEARRRLAG.

Belongs to the ATPase delta chain family. In terms of assembly, F-type ATPases have 2 components, F(1) - the catalytic core - and F(0) - the membrane proton channel. F(1) has five subunits: alpha(3), beta(3), gamma(1), delta(1), epsilon(1). F(0) has three main subunits: a(1), b(2) and c(10-14). The alpha and beta chains form an alternating ring which encloses part of the gamma chain. F(1) is attached to F(0) by a central stalk formed by the gamma and epsilon chains, while a peripheral stalk is formed by the delta and b chains.

The protein localises to the cell membrane. In terms of biological role, f(1)F(0) ATP synthase produces ATP from ADP in the presence of a proton or sodium gradient. F-type ATPases consist of two structural domains, F(1) containing the extramembraneous catalytic core and F(0) containing the membrane proton channel, linked together by a central stalk and a peripheral stalk. During catalysis, ATP synthesis in the catalytic domain of F(1) is coupled via a rotary mechanism of the central stalk subunits to proton translocation. Its function is as follows. This protein is part of the stalk that links CF(0) to CF(1). It either transmits conformational changes from CF(0) to CF(1) or is implicated in proton conduction. In Beutenbergia cavernae (strain ATCC BAA-8 / DSM 12333 / CCUG 43141 / JCM 11478 / NBRC 16432 / NCIMB 13614 / HKI 0122), this protein is ATP synthase subunit delta.